We begin with the raw amino-acid sequence, 51 residues long: ADEMRNVSDEEAKEFHAMFSQAFTVYVGVAVVAHILAWAWRPWIPGDEGFG.

At 1–17 the chain is on the cytoplasmic side; it reads ADEMRNVSDEEAKEFHA. A bacteriochlorophyll-binding residues include H16 and H34. The chain crosses the membrane as a helical span at residues 18 to 40; it reads MFSQAFTVYVGVAVVAHILAWAW. At 41–51 the chain is on the periplasmic side; the sequence is RPWIPGDEGFG.

The protein belongs to the antenna complex beta subunit family. In terms of assembly, the core complex is formed by different alpha and beta chains, binding bacteriochlorophyll molecules, and arranged most probably in tetrameric structures disposed around the reaction center. The non-pigmented gamma chains may constitute additional components.

Its subcellular location is the cell inner membrane. Its function is as follows. Antenna complexes are light-harvesting systems, which transfer the excitation energy to the reaction centers. This chain is Light-harvesting protein B800/850/890 beta-2 chain, found in Halorhodospira halophila (strain DSM 244 / SL1) (Ectothiorhodospira halophila (strain DSM 244 / SL1)).